Here is a 498-residue protein sequence, read N- to C-terminus: ATP synthase subunit beta, chloroplastic (498 aa).

172–179 (GGAGVGKT) contributes to the ATP binding site.

The protein belongs to the ATPase alpha/beta chains family. In terms of assembly, F-type ATPases have 2 components, CF(1) - the catalytic core - and CF(0) - the membrane proton channel. CF(1) has five subunits: alpha(3), beta(3), gamma(1), delta(1), epsilon(1). CF(0) has four main subunits: a(1), b(1), b'(1) and c(9-12).

Its subcellular location is the plastid. The protein localises to the chloroplast thylakoid membrane. It catalyses the reaction ATP + H2O + 4 H(+)(in) = ADP + phosphate + 5 H(+)(out). In terms of biological role, produces ATP from ADP in the presence of a proton gradient across the membrane. The catalytic sites are hosted primarily by the beta subunits. In Aspidistra elatior (Cast-iron plant), this protein is ATP synthase subunit beta, chloroplastic.